Consider the following 193-residue polypeptide: Peptidyl-tRNA hydrolase (193 aa).

Tyr-17 is a tRNA binding site. His-22 (proton acceptor) is an active-site residue. 3 residues coordinate tRNA: Tyr-68, Asn-70, and Asn-116.

It belongs to the PTH family. Monomer.

The protein localises to the cytoplasm. The catalysed reaction is an N-acyl-L-alpha-aminoacyl-tRNA + H2O = an N-acyl-L-amino acid + a tRNA + H(+). In terms of biological role, hydrolyzes ribosome-free peptidyl-tRNAs (with 1 or more amino acids incorporated), which drop off the ribosome during protein synthesis, or as a result of ribosome stalling. Functionally, catalyzes the release of premature peptidyl moieties from peptidyl-tRNA molecules trapped in stalled 50S ribosomal subunits, and thus maintains levels of free tRNAs and 50S ribosomes. This chain is Peptidyl-tRNA hydrolase, found in Acinetobacter baumannii (strain AB307-0294).